A 78-amino-acid polypeptide reads, in one-letter code: Defensin-like protein 74 (78 aa).

Positions 1–28 (MNYKIGIMSLLVITSIIFLFLVPDKVEA) are cleaved as a signal peptide. Intrachain disulfides connect cysteine 32-cysteine 73, cysteine 36-cysteine 58, cysteine 42-cysteine 71, and cysteine 46-cysteine 72.

Belongs to the DEFL family.

It is found in the secreted. This Arabidopsis thaliana (Mouse-ear cress) protein is Defensin-like protein 74 (LCR43).